A 307-amino-acid chain; its full sequence is Secondary metabolism regulator LAE1 (307 aa).

Belongs to the methyltransferase superfamily. LaeA methyltransferase family. Component of the heterotrimeric velvet complex composed of LAE1, VEL1 and VEL2; VEL1 acting as a bridging protein between LAE1 and VEL2.

The protein resides in the nucleus. The catalysed reaction is L-methionyl-[protein] + S-adenosyl-L-methionine = S-methyl-L-methionyl-[protein] + S-adenosyl-L-homocysteine. Functionally, methyltransferase that performs automethylation. No other methyl-accepting substrate has been identified yet. Component of the velvet transcription factor complex that acts as a global regulator for secondary metabolite gene expression. Controls the expression of the T-toxin gene cluster. Promotes oxidative stress tolerance and acts as a virulence factors during infection. Negatively regulate mycelial pigmentation and controls sexual development, as well as asexual development during vegetative growth. This Cochliobolus heterostrophus (strain C5 / ATCC 48332 / race O) (Southern corn leaf blight fungus) protein is Secondary metabolism regulator LAE1.